The following is a 37-amino-acid chain: NAD-reducing hydrogenase HoxS subunit alpha (37 aa).

Belongs to the complex I 51 kDa subunit family. Tetramer of an alpha and a gamma subunits (flavin-containing dimer), and a delta and a nickel-containing beta subunits (hydrogenase dimer). FMN is required as a cofactor. The cofactor is [4Fe-4S] cluster.

Its subcellular location is the cytoplasm. It catalyses the reaction H2 + NAD(+) = NADH + H(+). Functionally, subunits alpha and gamma of HoxS constitute an NADH--oxidoreductase. The chain is NAD-reducing hydrogenase HoxS subunit alpha (hoxF) from Rhodococcus opacus (Nocardia opaca).